Reading from the N-terminus, the 314-residue chain is Ribosomal protein L11 methyltransferase (314 aa).

The S-adenosyl-L-methionine site is built by Thr-163, Gly-184, Asp-206, and Asn-248.

The protein belongs to the methyltransferase superfamily. PrmA family.

It localises to the cytoplasm. It carries out the reaction L-lysyl-[protein] + 3 S-adenosyl-L-methionine = N(6),N(6),N(6)-trimethyl-L-lysyl-[protein] + 3 S-adenosyl-L-homocysteine + 3 H(+). Functionally, methylates ribosomal protein L11. The protein is Ribosomal protein L11 methyltransferase of Lactobacillus acidophilus (strain ATCC 700396 / NCK56 / N2 / NCFM).